The sequence spans 511 residues: Zinc finger CCCH-type with G patch domain-containing protein (511 aa).

Residue methionine 1 is modified to N-acetylmethionine. Serine 70 is modified (phosphoserine). Positions 92–129 are disordered; it reads PGAPCNDSETAPGSEVQPGSTSSALEEEEEDPDLEELS. Positions 98–115 are enriched in polar residues; sequence DSETAPGSEVQPGSTSSA. Over residues 116 to 127 the composition is skewed to acidic residues; that stretch reads LEEEEEDPDLEE. The C3H1-type zinc-finger motif lies at 174-200; that stretch reads KSLKPCPFFLEGKCRFKENCRFSHGQV. The segment at 266–291 is disordered; the sequence is PPLRTEATESSDSDTGDASDSSYARV. The residue at position 276 (serine 276) is a Phosphoserine. The residue at position 280 (threonine 280) is a Phosphothreonine. The G-patch domain maps to 313–359; sequence TRGIGSKLLVKMGYEFGKGLGRHAEGRVEPIHAVVLPRGKSLDQCAE. Serine 353 is modified (phosphoserine). 2 disordered regions span residues 363-393 and 490-511; these read KKTK…PPRN and AQEA…MTEF. The span at 491-511 shows a compositional bias: basic and acidic residues; the sequence is QEADLQRKQRKADTHRKMTEF.

Interacts with CHD4/Mi-2; the interaction is direct.

It is found in the nucleus. Functionally, transcription repressor that specifically binds the 5'-GGAG[GA]A[GA]A-3' consensus sequence. Represses transcription by recruiting the chromatin multiprotein complex NuRD to target promoters. Negatively regulates expression of EGFR, a gene involved in cell proliferation, survival and migration. Its ability to repress genes of the EGFR pathway suggest it may act as a tumor suppressor. This chain is Zinc finger CCCH-type with G patch domain-containing protein (Zgpat), found in Mus musculus (Mouse).